We begin with the raw amino-acid sequence, 283 residues long: Polyprenyl-phosphate transporter (283 aa).

A run of 9 helical transmembrane segments spans residues 27–47, 51–71, 85–105, 112–132, 148–168, 169–189, 197–217, 230–250, and 255–275; these read GTIA…SGIF, FWPS…AMGS, IPTM…LLKI, FTTK…VITL, TSLI…MLLP, GISG…MLAI, FAGL…FIIS, LMTF…VFPG, and IVMW…SLTL.

It belongs to the PopT family.

Its subcellular location is the cell membrane. With respect to regulation, active in alkaline conditions. In terms of biological role, flippase that catalyzes the transport of undecaprenyl phosphate (UndP) across the cytoplasmic membrane, from the external side to the cytoplasmic side. Is involved in UndP recycling during peptidoglycan synthesis. Necessary for peptidoglycan maintenance. The protein is Polyprenyl-phosphate transporter of Staphylococcus aureus (strain NCTC 8325 / PS 47).